A 376-amino-acid chain; its full sequence is Fibromodulin (376 aa).

An N-terminal signal peptide occupies residues 1 to 18 (MQWASVLLLAGLCSLSQG). Position 19 is a pyrrolidone carboxylic acid (Q19). 6 positions are modified to sulfotyrosine: Y20, Y38, Y53, Y55, Y63, and Y65. In terms of domain architecture, LRRNT spans 67–105 (APPPPEPRDCPQECDCPPNFPTAMYCDNRNLKYLPFVPS). LRR repeat units follow at residues 106 to 127 (RMKYVYFQNNQISAIQEGVFDN), 130 to 151 (GLLWVALHGNQITSDKVGRKVF), 156 to 176 (HLERLYLDHNNLTRMPGPLPR), 177 to 198 (SLRELHLDHNQISRVPNNALEG), 201 to 222 (NLTALYLHHNEIQEVGSSMRGL), 224 to 245 (SLILLDLSYNHLRRVPDGLPSA), 246 to 266 (LEQLYLEHNNVYTVPDSYFRG), and 269 to 289 (KLLYVRLSHNSLTNNGLATNT). N127 is a glycosylation site (N-linked (GlcNAc...) (keratan sulfate) asparagine). N166 carries N-linked (GlcNAc...) (keratan sulfate) asparagine glycosylation. An N-linked (GlcNAc...) (keratan sulfate) asparagine glycan is attached at N201. The N-linked (GlcNAc...) (keratan sulfate) asparagine glycan is linked to N291. LRR repeat units lie at residues 294-315 (SLLELDLSYNQLQKIPPVNTNL) and 316-335 (ENLYLQGNRINEFSISSFCT). An intrachain disulfide couples C334 to C367. An N-linked (GlcNAc...) asparagine glycan is attached at N341. One copy of the LRR 11 repeat lies at 344–367 (KLQVLRLDGNEIKRSAMPVDAPLC).

The protein belongs to the small leucine-rich proteoglycan (SLRP) family. SLRP class II subfamily. Binds to type I and type II collagen. Post-translationally, binds keratan sulfate chains. In terms of processing, sulfated on tyrosine residue(s). In terms of tissue distribution, highest levels observed in knee epiphysis, in calvarial and diaphyseal bone, in nasal and costal cartilage, in the eye, and in bladder. In mature knee joint it is mostly present in the proliferating zone of growth plate. It is also observed in ligaments, especially at insertion sites, in the junction between meniscus and joint capsule, in the perimysium of skeletal muscle and in the periosteum.

Its subcellular location is the secreted. The protein resides in the extracellular space. It is found in the extracellular matrix. In terms of biological role, affects the rate of fibrils formation. May have a primary role in collagen fibrillogenesis. This Mus musculus (Mouse) protein is Fibromodulin (Fmod).